We begin with the raw amino-acid sequence, 169 residues long: UPF0725 protein At2g19200 (169 aa).

This sequence belongs to the UPF0725 (EMB2204) family.

In Arabidopsis thaliana (Mouse-ear cress), this protein is UPF0725 protein At2g19200.